Here is a 618-residue protein sequence, read N- to C-terminus: Carbamoyl phosphate synthase large chain, C-terminal section (618 aa).

The segment at 1–78 is oligomerization domain; sequence MDMEKLKEIL…ETFVYKEQDE (78 aa). Positions 79 to 477 are carbamoyl phosphate synthetic domain; the sequence is SNPSDRKKVI…YKAQLSANME (399 aa). The region spanning 208 to 399 is the ATP-grasp domain; that stretch reads SKLLKKLNIP…LAKLATKIML (192 aa). Residues arginine 244, lysine 283, leucine 285, glutamate 290, glycine 315, valine 316, histidine 317, serine 318, glutamine 358, and glutamate 370 each coordinate ATP. The Mg(2+) site is built by glutamine 358, glutamate 370, and asparagine 372. Residues glutamine 358, glutamate 370, and asparagine 372 each coordinate Mn(2+). One can recognise an MGS-like domain in the interval 476–618; sequence MELPIVGNVF…ELDARIKNRF (143 aa). Positions 478–618 are allosteric domain; sequence LPIVGNVFIS…ELDARIKNRF (141 aa).

Belongs to the CarB family. As to quaternary structure, composed of two chains; the small (or glutamine) chain promotes the hydrolysis of glutamine to ammonia, which is used by the large (or ammonia) chain to synthesize carbamoyl phosphate. Tetramer of heterodimers (alpha,beta)4. It depends on Mg(2+) as a cofactor. Mn(2+) serves as cofactor.

It carries out the reaction hydrogencarbonate + L-glutamine + 2 ATP + H2O = carbamoyl phosphate + L-glutamate + 2 ADP + phosphate + 2 H(+). The enzyme catalyses hydrogencarbonate + NH4(+) + 2 ATP = carbamoyl phosphate + 2 ADP + phosphate + 2 H(+). It functions in the pathway amino-acid biosynthesis; L-arginine biosynthesis; carbamoyl phosphate from bicarbonate: step 1/1. It participates in pyrimidine metabolism; UMP biosynthesis via de novo pathway; (S)-dihydroorotate from bicarbonate: step 1/3. Large subunit of the glutamine-dependent carbamoyl phosphate synthetase (CPSase). CPSase catalyzes the formation of carbamoyl phosphate from the ammonia moiety of glutamine, carbonate, and phosphate donated by ATP, constituting the first step of 2 biosynthetic pathways, one leading to arginine and/or urea and the other to pyrimidine nucleotides. The large subunit (synthetase) binds the substrates ammonia (free or transferred from glutamine from the small subunit), hydrogencarbonate and ATP and carries out an ATP-coupled ligase reaction, activating hydrogencarbonate by forming carboxy phosphate which reacts with ammonia to form carbamoyl phosphate. This Methanocaldococcus jannaschii (strain ATCC 43067 / DSM 2661 / JAL-1 / JCM 10045 / NBRC 100440) (Methanococcus jannaschii) protein is Carbamoyl phosphate synthase large chain, C-terminal section (carB2).